Consider the following 950-residue polypeptide: Protein translocase subunit SecA 1 (950 aa).

ATP is bound by residues Gln83, 101-105 (GEGKT), and Asp490. The segment at 864–950 (EGGAGRKNAA…AKPPKSVKKR (87 aa)) is disordered. The segment covering 873–888 (AAREEAPSRLRAKGIE) has biased composition (basic and acidic residues).

It belongs to the SecA family. Monomer and homodimer. Part of the essential Sec protein translocation apparatus which comprises SecA, SecYEG and auxiliary proteins SecDF. Other proteins may also be involved.

The protein localises to the cell membrane. The protein resides in the cytoplasm. The enzyme catalyses ATP + H2O + cellular proteinSide 1 = ADP + phosphate + cellular proteinSide 2.. Functionally, part of the Sec protein translocase complex. Interacts with the SecYEG preprotein conducting channel. Has a central role in coupling the hydrolysis of ATP to the transfer of proteins into and across the cell membrane, serving as an ATP-driven molecular motor driving the stepwise translocation of polypeptide chains across the membrane. This chain is Protein translocase subunit SecA 1, found in Mycobacterium ulcerans (strain Agy99).